The following is a 195-amino-acid chain: ATP-dependent Clp protease proteolytic subunit (195 aa).

The active-site Nucleophile is serine 99. Residue histidine 124 is part of the active site.

The protein belongs to the peptidase S14 family. Fourteen ClpP subunits assemble into 2 heptameric rings which stack back to back to give a disk-like structure with a central cavity, resembling the structure of eukaryotic proteasomes.

It is found in the cytoplasm. It catalyses the reaction Hydrolysis of proteins to small peptides in the presence of ATP and magnesium. alpha-casein is the usual test substrate. In the absence of ATP, only oligopeptides shorter than five residues are hydrolyzed (such as succinyl-Leu-Tyr-|-NHMec, and Leu-Tyr-Leu-|-Tyr-Trp, in which cleavage of the -Tyr-|-Leu- and -Tyr-|-Trp bonds also occurs).. In terms of biological role, cleaves peptides in various proteins in a process that requires ATP hydrolysis. Has a chymotrypsin-like activity. Plays a major role in the degradation of misfolded proteins. The chain is ATP-dependent Clp protease proteolytic subunit from Caldicellulosiruptor saccharolyticus (strain ATCC 43494 / DSM 8903 / Tp8T 6331).